The chain runs to 187 residues: Elongation factor P (187 aa).

It belongs to the elongation factor P family.

It localises to the cytoplasm. The protein operates within protein biosynthesis; polypeptide chain elongation. In terms of biological role, involved in peptide bond synthesis. Stimulates efficient translation and peptide-bond synthesis on native or reconstituted 70S ribosomes in vitro. Probably functions indirectly by altering the affinity of the ribosome for aminoacyl-tRNA, thus increasing their reactivity as acceptors for peptidyl transferase. The sequence is that of Elongation factor P from Mycoplasmopsis agalactiae (strain NCTC 10123 / CIP 59.7 / PG2) (Mycoplasma agalactiae).